We begin with the raw amino-acid sequence, 1215 residues long: Metabotropic glycine receptor (1215 aa).

The first 23 residues, 1–23 (MGAMAYPLLLCLLLAQLGLGAVG), serve as a signal peptide directing secretion. Residues 23–66 (GASRDPQGRPDSPRERTPKGKPHAQQPGRASASDSSAPWSRSTD) form a disordered region. Residues 24 to 417 (ASRDPQGRPD…CFVQEDKYLR (394 aa)) lie on the Extracellular side of the membrane. The segment covering 28-40 (PQGRPDSPRERTP) has biased composition (basic and acidic residues). A compositionally biased stretch (low complexity) spans 52-64 (ASASDSSAPWSRS). A cache-like region region spans residues 85–281 (YLYTGDSHQL…CENGSYKPGW (197 aa)). N-linked (GlcNAc...) asparagine glycosylation is found at asparagine 98 and asparagine 143. A disulfide bridge connects residues cysteine 99 and cysteine 272. Residues serine 172 and arginine 173 each coordinate glycine. A glycan (N-linked (GlcNAc...) asparagine) is linked at asparagine 215. Glutamate 271 contributes to the glycine binding site. Asparagine 274 carries an N-linked (GlcNAc...) asparagine glycan. Aspartate 307 is a glycine binding site. Asparagine 333 carries N-linked (GlcNAc...) asparagine glycosylation. A helical transmembrane segment spans residues 418–439 (LAIISFQALCMLLDFVSMLVVY). The Cytoplasmic segment spans residues 440-451 (HFRKAKSIRASG). Residues 452-474 (LILLETILFGSLLLYFPVVILYF) form a helical membrane-spanning segment. Over 475–478 (EPST) the chain is Extracellular. A helical transmembrane segment spans residues 479-501 (FRCILLRWARLLGFATVYGTVTL). Cysteines 481 and 573 form a disulfide. Residues 502–525 (KLHRVLKVFLSRTAQRIPYMTGGR) lie on the Cytoplasmic side of the membrane. Residues 526–547 (VMRMLAVILLVVFWFLIGWTSS) traverse the membrane as a helical segment. The Extracellular segment spans residues 548 to 576 (VCQNLEKQISLIGQGKTSDHLIFNMCLID). Residues 577 to 597 (RWDYMTAVAEFLFLLWGVYLC) traverse the membrane as a helical segment. Over 598–611 (YAVRTVPSAFHEPR) the chain is Cytoplasmic. A helical membrane pass occupies residues 612 to 633 (YMAVAVHNELIISAIFHTIRFV). Topologically, residues 634-642 (LASRLQSDW) are extracellular. The chain crosses the membrane as a helical span at residues 643 to 664 (MLMLYFAHTHLTVTVTIGLLLI). The Cytoplasmic segment spans residues 665–1215 (PKFSHSSNNP…KEEIWDSFKV (551 aa)). Phosphoserine is present on residues serine 694, serine 705, and serine 708. The interval 757–999 (RITEIPETVS…LNPGTTQMKD (243 aa)) is disordered. Basic and acidic residues-rich tracts occupy residues 769–781 (CSKE…DHGT) and 819–828 (STYDHVRDQT). Lysine 774 is covalently cross-linked (Glycyl lysine isopeptide (Lys-Gly) (interchain with G-Cter in ubiquitin)). At serine 865 the chain carries Phosphoserine. The span at 925–943 (VEERTKSQKPLPKDKETNR) shows a compositional bias: basic and acidic residues. Position 946 is a phosphoserine (serine 946). Residues 979 to 998 (QRVNPTTANSDLNPGTTQMK) are compositionally biased toward polar residues. 2 short sequence motifs (VCPWE motif) span residues 1006–1010 (VCPWE) and 1071–1075 (VCLWE). At serine 1080 the chain carries Phosphoserine. A disordered region spans residues 1117–1164 (SEELPPKAVASKTENENLNQIGHQEKKTSSSEENVRGSYNSSNNFQQP). Over residues 1139–1151 (HQEKKTSSSEENV) the composition is skewed to basic and acidic residues. Positions 1153-1164 (GSYNSSNNFQQP) are enriched in polar residues. The VCPWE motif 3 signature appears at 1171–1175 (VCPWE).

It belongs to the G-protein coupled receptor 3 family. As to quaternary structure, homodimer. Associates with the RGS7-GNB5 complex, promoting its localization to the cell membrane and regulating its GTPase activator activity. Interacts (via VCPWE motifs) with GNAO1. Interacts with GPC4. Interacts with EGFLAM.

Its subcellular location is the cell membrane. The protein resides in the postsynaptic cell membrane. It localises to the presynaptic cell membrane. It is found in the nucleus. In terms of biological role, metabotropic receptor for glycine that controls synapse formation and function in the brain. Acts as an atypical G-protein coupled receptor that recruits and regulates the RGS7-GNB5 complex instead of activating G proteins. In absence of glycine ligand, promotes the GTPase activator activity of RGS7, increasing the GTPase activity of G protein alpha subunits, thereby driving them into their inactive GDP-bound form. Glycine-binding changes the conformation of the intracellular surface, inhibiting the GTPase activator activity of the RGS7-GNB5 complex, promoting G protein alpha subunits into their active GTP-bound form and regulating cAMP levels. Also able to bind taurine, a compound closely related to glycine, but with a two-fold lower affinity. Glycine receptor-dependent regulation of cAMP controls key ion channels, kinases and neurotrophic factors involved in neuronal excitability and synaptic transmission. Plays a pivotal role in regulating mood and cognition via its ability to regulate neuronal excitability in L2/L3 pyramidal neurons of the prefrontal cortex. Also involved in spatial learning by regulating hippocampal CA1 neuronal excitability. Acts as a synaptic organizer in the hippocampus, required for proper mossy fiber-CA3 neurocircuitry establishment, structure and function: induces presynaptic differentiation in contacting axons via its interaction with GPC4. In addition to glycine, may also act as a receptor for osteocalcin (BGLAP) hormone: osteocalcin-binding initiates a signaling response that prevents neuronal apoptosis in the hippocampus and regulates the synthesis of neurotransmitters. This Homo sapiens (Human) protein is Metabotropic glycine receptor.